Here is a 71-residue protein sequence, read N- to C-terminus: Ranatuerin-2PLa (71 aa).

Positions 1–22 (MFTTKKSMLLFFFLGTISLSLC) are cleaved as a signal peptide. A propeptide spanning residues 23–41 (EQERGADEDDGVEMTEEEV) is cleaved from the precursor. Cys66 and Cys71 are disulfide-bonded.

In terms of tissue distribution, expressed by the skin glands.

Its subcellular location is the secreted. May have antimicrobial activity against the Gram-negative bacterium E.coli. The polypeptide is Ranatuerin-2PLa (Lithobates palustris (Pickerel frog)).